The primary structure comprises 327 residues: Small ribosomal subunit protein uS2 (327 aa).

The interval A258–E327 is disordered.

It belongs to the universal ribosomal protein uS2 family.

This Anaplasma marginale (strain St. Maries) protein is Small ribosomal subunit protein uS2.